We begin with the raw amino-acid sequence, 118 residues long: Holo-[acyl-carrier-protein] synthase (118 aa).

Mg(2+) is bound by residues aspartate 5 and glutamate 50.

This sequence belongs to the P-Pant transferase superfamily. AcpS family. The cofactor is Mg(2+).

It localises to the cytoplasm. It catalyses the reaction apo-[ACP] + CoA = holo-[ACP] + adenosine 3',5'-bisphosphate + H(+). Its function is as follows. Transfers the 4'-phosphopantetheine moiety from coenzyme A to a Ser of acyl-carrier-protein. The protein is Holo-[acyl-carrier-protein] synthase of Aliarcobacter butzleri (strain RM4018) (Arcobacter butzleri).